Reading from the N-terminus, the 292-residue chain is Undecaprenyl-diphosphatase 2 (292 aa).

A run of 5 helical transmembrane segments spans residues 89–109 (WLVI…QDAI), 118–138 (LIAT…WYAS), 203–223 (FLLA…SIGG), 232–252 (PTIL…AWFL), and 263–283 (FVLY…GGAL).

Belongs to the UppP family.

Its subcellular location is the cell membrane. It carries out the reaction di-trans,octa-cis-undecaprenyl diphosphate + H2O = di-trans,octa-cis-undecaprenyl phosphate + phosphate + H(+). Functionally, catalyzes the dephosphorylation of undecaprenyl diphosphate (UPP). Confers resistance to bacitracin. The sequence is that of Undecaprenyl-diphosphatase 2 from Frankia casuarinae (strain DSM 45818 / CECT 9043 / HFP020203 / CcI3).